Consider the following 447-residue polypeptide: ATP-dependent protease ATPase subunit HslU (447 aa).

ATP is bound by residues Ile17, 59 to 64 (GVGKTE), Asp256, Glu321, and Arg393.

The protein belongs to the ClpX chaperone family. HslU subfamily. A double ring-shaped homohexamer of HslV is capped on each side by a ring-shaped HslU homohexamer. The assembly of the HslU/HslV complex is dependent on binding of ATP.

Its subcellular location is the cytoplasm. Functionally, ATPase subunit of a proteasome-like degradation complex; this subunit has chaperone activity. The binding of ATP and its subsequent hydrolysis by HslU are essential for unfolding of protein substrates subsequently hydrolyzed by HslV. HslU recognizes the N-terminal part of its protein substrates and unfolds these before they are guided to HslV for hydrolysis. This Stutzerimonas stutzeri (strain A1501) (Pseudomonas stutzeri) protein is ATP-dependent protease ATPase subunit HslU.